A 224-amino-acid polypeptide reads, in one-letter code: Uracil-DNA glycosylase (224 aa).

Asp64 (proton acceptor) is an active-site residue.

This sequence belongs to the uracil-DNA glycosylase (UDG) superfamily. UNG family.

It localises to the cytoplasm. It carries out the reaction Hydrolyzes single-stranded DNA or mismatched double-stranded DNA and polynucleotides, releasing free uracil.. Functionally, excises uracil residues from the DNA which can arise as a result of misincorporation of dUMP residues by DNA polymerase or due to deamination of cytosine. The polypeptide is Uracil-DNA glycosylase (Geobacillus sp. (strain WCH70)).